The primary structure comprises 592 residues: E3 ubiquitin-protein ligase RNF180 (592 aa).

The Cytoplasmic segment spans residues 1-564 (MKRSKELITK…DSRGWWFDMD (564 aa)). Ser230 is subject to Phosphoserine. The RING-type zinc finger occupies 432–474 (CAVCLDVYFNPYMCYPCRHIFCEPCLRTLAKDNPSSTPCPLCR). The helical transmembrane segment at 565–585 (MVIIYIYSVNWVIGFIVFCFL) threads the bilayer. Over 586 to 592 (CYFFFPF) the chain is Extracellular.

Interacts with ZIC2.

It is found in the endoplasmic reticulum membrane. It localises to the nucleus envelope. The catalysed reaction is S-ubiquitinyl-[E2 ubiquitin-conjugating enzyme]-L-cysteine + [acceptor protein]-L-lysine = [E2 ubiquitin-conjugating enzyme]-L-cysteine + N(6)-ubiquitinyl-[acceptor protein]-L-lysine.. The protein operates within protein modification; protein ubiquitination. Functionally, E3 ubiquitin-protein ligase which promotes polyubiquitination and degradation by the proteasome pathway of ZIC2. This is E3 ubiquitin-protein ligase RNF180 (RNF180) from Pongo abelii (Sumatran orangutan).